A 188-amino-acid polypeptide reads, in one-letter code: VLGGGAIYGGGSRCSAAFNVTKGGARYFVTAGHCTNISANWSASSGGSVVGVREGTSFPTNDYGIVRYTDGSSPAGTVDLYNGSTQDISSAANAVVGQAIKKSGSTTKVTSGTVTAVNVTVNYGDGPVYNMGRTTACSAGGDSGGAHFAGSVALGIHSGSSGCSGTAGSAIHQPVTKALSAYGVTVYL.

Cys14 and Cys34 form a disulfide bridge. Residues His33, Asp62, and Ser143 each act as charge relay system in the active site. Cys137 and Cys163 form a disulfide bridge.

This sequence belongs to the peptidase S1 family. Monomer.

It carries out the reaction Preferential cleavage: -Glu-|-Xaa- &gt;&gt; -Asp-|-Xaa-. Preference for Pro or Leu at P2 and Phe at P3. Cleavage of -Glu-|-Asp- and -Glu-|-Pro- bonds is slow.. In terms of biological role, preferentially cleaves peptide bonds on the carboxyl-terminal side of glutamate. The protein is Glutamyl endopeptidase 2 (sprE) of Streptomyces griseus.